Reading from the N-terminus, the 460-residue chain is G2/mitotic-specific cyclin-4 (460 aa).

The protein belongs to the cyclin family. Cyclin AB subfamily.

Functionally, essential for the control of the cell cycle at the G2/M (mitosis) transition. Interacts with the CDC2 protein kinase to form MPF. G2/M cyclins accumulate steadily during G2 and are abruptly destroyed at mitosis. In Saccharomyces cerevisiae (strain ATCC 204508 / S288c) (Baker's yeast), this protein is G2/mitotic-specific cyclin-4 (CLB4).